Reading from the N-terminus, the 129-residue chain is Putative pre-16S rRNA nuclease (129 aa).

Belongs to the YqgF nuclease family.

Its subcellular location is the cytoplasm. In terms of biological role, could be a nuclease involved in processing of the 5'-end of pre-16S rRNA. This chain is Putative pre-16S rRNA nuclease, found in Campylobacter jejuni subsp. doylei (strain ATCC BAA-1458 / RM4099 / 269.97).